Consider the following 213-residue polypeptide: Cytokinin riboside 5'-monophosphate phosphoribohydrolase LOG2 (213 aa).

Residues Glu-79, 97 to 98, 114 to 120, and Thr-126 contribute to the substrate site; these read RK and GYGTFEE.

It belongs to the LOG family. In terms of tissue distribution, expressed in roots and shoots. Detected in root hairs.

It is found in the cytoplasm. The protein resides in the nucleus. The catalysed reaction is N(6)-(dimethylallyl)adenosine 5'-phosphate + H2O = N(6)-dimethylallyladenine + D-ribose 5-phosphate. It carries out the reaction 9-ribosyl-trans-zeatin 5'-phosphate + H2O = trans-zeatin + D-ribose 5-phosphate. In terms of biological role, cytokinin-activating enzyme working in the direct activation pathway. Phosphoribohydrolase that converts inactive cytokinin nucleotides to the biologically active free-base forms. The chain is Cytokinin riboside 5'-monophosphate phosphoribohydrolase LOG2 (LOG2) from Arabidopsis thaliana (Mouse-ear cress).